Reading from the N-terminus, the 284-residue chain is Tropomyosin alpha-1 chain (284 aa).

Residues 1-38 form a disordered region; sequence MDAIKKKMQMLKLDKENALDRAEQAEADKKAAEERSKQ. A coiled-coil region spans residues 1-284; the sequence is MDAIKKKMQM…DHALNDMTSI (284 aa). Residues 12 to 38 are compositionally biased toward basic and acidic residues; the sequence is KLDKENALDRAEQAEADKKAAEERSKQ.

Belongs to the tropomyosin family. Homodimer. Heterodimer of an alpha (TPM1, TPM3 or TPM4) and a beta (TPM2) chain. Interacts with HRG (via the HRR domain); the interaction contributes to the antiangiogenic properties of the histidine/proline-rich region (HRR) of HRG.

Its subcellular location is the cytoplasm. It is found in the cytoskeleton. Binds to actin filaments in muscle and non-muscle cells. Plays a central role, in association with the troponin complex, in the calcium dependent regulation of vertebrate striated muscle contraction. Smooth muscle contraction is regulated by interaction with caldesmon. In non-muscle cells is implicated in stabilizing cytoskeleton actin filaments. The protein is Tropomyosin alpha-1 chain (TPM1) of Coturnix japonica (Japanese quail).